We begin with the raw amino-acid sequence, 102 residues long: Small ribosomal subunit protein uS10 (102 aa).

The protein belongs to the universal ribosomal protein uS10 family. Part of the 30S ribosomal subunit.

Involved in the binding of tRNA to the ribosomes. In Micrococcus luteus (strain ATCC 4698 / DSM 20030 / JCM 1464 / CCM 169 / CCUG 5858 / IAM 1056 / NBRC 3333 / NCIMB 9278 / NCTC 2665 / VKM Ac-2230) (Micrococcus lysodeikticus), this protein is Small ribosomal subunit protein uS10.